Consider the following 279-residue polypeptide: Vomeronasal type-1 receptor A8 (279 aa).

Residues 1 to 19 (MNKDHTLYCSVYIRNAFFS) are Extracellular-facing. The chain crosses the membrane as a helical span at residues 20–40 (EIGIGISANSCLLLFHTFMFI). Residues 41–49 (RGHRPRLTD) are Cytoplasmic-facing. The chain crosses the membrane as a helical span at residues 50–70 (LPIGFVALIHLVMLLLAAYIT). Over 71–93 (EDFFMSSGGWDDITCKLVIFLHR) the chain is Extracellular. Cysteines 85 and 172 form a disulfide. The helical transmembrane segment at 94 to 114 (FFRSLSVCATCLLSVFQAIIL) threads the bilayer. The Cytoplasmic portion of the chain corresponds to 115–134 (CPQSSHLAKLKQNSPHQLSY). A helical membrane pass occupies residues 135-155 (FFIFLSIFYTSISSQILIAAI). At 156-159 (PTQN) the chain is on the extracellular side. An N-linked (GlcNAc...) asparagine glycan is attached at N159. The chain crosses the membrane as a helical span at residues 160–180 (ITFVNLIYITNSCSFLPLSSS). Residues 181–187 (MQHTFST) are Cytoplasmic-facing. Residues 188-208 (LLTFRNVFVIGLMGLSTCYMA) traverse the membrane as a helical segment. Topologically, residues 209–238 (TLLCRHKTRSQRLQNSKLSPKATPEQRALR) are extracellular. Residues 239–259 (TILMLMSFFLLMSTFDSIISY) traverse the membrane as a helical segment. Residues 260–279 (SRTIITGKSTALLCPDSCRS) are Cytoplasmic-facing.

The protein belongs to the G-protein coupled receptor 1 family. Expressed in a subset of sensory neurons located in the apical layer of the vomeronasal organ.

The protein resides in the cell membrane. In terms of biological role, putative pheromone receptor implicated in the regulation of social and reproductive behavior. This is Vomeronasal type-1 receptor A8 from Mus musculus (Mouse).